The following is a 293-amino-acid chain: Probable endoribonuclease YicC (293 aa).

Belongs to the YicC/YloC family. Requires a divalent metal cation as cofactor.

Functionally, negatively modulates sporulation, probably in response to nutrient conditions. Effects expression of sporulation regulator spo0A in an indirect manner, possibly via repression of the sinRR' operon. In terms of biological role, probably a ssRNA endonuclease. Its function is as follows. Might contribute to small RNA (sRNA) regulation. In Clostridioides difficile (strain 630) (Peptoclostridium difficile), this protein is Probable endoribonuclease YicC.